A 362-amino-acid polypeptide reads, in one-letter code: UDP-N-acetylglucosamine--N-acetylmuramyl-(pentapeptide) pyrophosphoryl-undecaprenol N-acetylglucosamine transferase (362 aa).

UDP-N-acetyl-alpha-D-glucosamine contacts are provided by residues Thr14–Gly16, Asn126, Arg166, Ser193, and Gln294.

Belongs to the glycosyltransferase 28 family. MurG subfamily.

The protein localises to the cell inner membrane. It catalyses the reaction di-trans,octa-cis-undecaprenyl diphospho-N-acetyl-alpha-D-muramoyl-L-alanyl-D-glutamyl-meso-2,6-diaminopimeloyl-D-alanyl-D-alanine + UDP-N-acetyl-alpha-D-glucosamine = di-trans,octa-cis-undecaprenyl diphospho-[N-acetyl-alpha-D-glucosaminyl-(1-&gt;4)]-N-acetyl-alpha-D-muramoyl-L-alanyl-D-glutamyl-meso-2,6-diaminopimeloyl-D-alanyl-D-alanine + UDP + H(+). It participates in cell wall biogenesis; peptidoglycan biosynthesis. In terms of biological role, cell wall formation. Catalyzes the transfer of a GlcNAc subunit on undecaprenyl-pyrophosphoryl-MurNAc-pentapeptide (lipid intermediate I) to form undecaprenyl-pyrophosphoryl-MurNAc-(pentapeptide)GlcNAc (lipid intermediate II). In Paracoccus denitrificans (strain Pd 1222), this protein is UDP-N-acetylglucosamine--N-acetylmuramyl-(pentapeptide) pyrophosphoryl-undecaprenol N-acetylglucosamine transferase.